Reading from the N-terminus, the 124-residue chain is Putative iron-sulfur cluster insertion protein ErpA (124 aa).

3 residues coordinate iron-sulfur cluster: cysteine 52, cysteine 116, and cysteine 118.

The protein belongs to the HesB/IscA family. As to quaternary structure, homodimer. Iron-sulfur cluster is required as a cofactor.

Required for insertion of 4Fe-4S clusters. The polypeptide is Putative iron-sulfur cluster insertion protein ErpA (Ralstonia nicotianae (strain ATCC BAA-1114 / GMI1000) (Ralstonia solanacearum)).